The following is a 305-amino-acid chain: Probable xyloglucan endotransglucosylase/hydrolase protein 21 (305 aa).

Positions 1–25 (MVSSTLLVMSISLFLGLSILLVVHG) are cleaved as a signal peptide. Residues 26–216 (KDFNQDIDIT…WSQGPFVASF (191 aa)) form the GH16 domain. N-linked (GlcNAc...) asparagine glycosylation occurs at Asn46. The active-site Nucleophile is Glu102. The active-site Proton donor is Glu106. Residue Glu106 coordinates xyloglucan. Residue Asn110 is glycosylated (N-linked (GlcNAc...) asparagine). Xyloglucan-binding positions include 119–121 (HTN) and 129–131 (DRE). Asn146 carries N-linked (GlcNAc...) asparagine glycosylation. Xyloglucan is bound by residues 195–196 (DW) and Gly200. Asn206 and Asn231 each carry an N-linked (GlcNAc...) asparagine glycan. 2 disulfides stabilise this stretch: Cys225–Cys239 and Cys282–Cys296. Positions 236 to 253 (TSPCSPGDSTSSSSSSTS) are enriched in low complexity. Residues 236–258 (TSPCSPGDSTSSSSSSTSEWFSQ) form a disordered region. Arg287 provides a ligand contact to xyloglucan.

The protein belongs to the glycosyl hydrolase 16 family. XTH group 2 subfamily. In terms of processing, contains at least one intrachain disulfide bond essential for its enzymatic activity. As to expression, predominantly expressed in green siliques.

The protein localises to the secreted. Its subcellular location is the cell wall. The protein resides in the extracellular space. It localises to the apoplast. The enzyme catalyses breaks a beta-(1-&gt;4) bond in the backbone of a xyloglucan and transfers the xyloglucanyl segment on to O-4 of the non-reducing terminal glucose residue of an acceptor, which can be a xyloglucan or an oligosaccharide of xyloglucan.. Catalyzes xyloglucan endohydrolysis (XEH) and/or endotransglycosylation (XET). Cleaves and religates xyloglucan polymers, an essential constituent of the primary cell wall, and thereby participates in cell wall construction of growing tissues. The chain is Probable xyloglucan endotransglucosylase/hydrolase protein 21 (XTH21) from Arabidopsis thaliana (Mouse-ear cress).